The primary structure comprises 105 residues: Protein AlbB (105 aa).

Involved in the biosynthesis of albonoursin (cyclo[(alpha,beta-dehydro-Phe)-(alpha,beta-dehydro-Leu)]), an antibacterial peptide. AlbB is essential for cyclic dipeptide oxidase AlbA (CDO) activity. The sequence is that of Protein AlbB (albB) from Streptomyces noursei (Streptomyces albulus).